The following is a 190-amino-acid chain: dCTP deaminase (190 aa).

DCTP-binding positions include 113 to 118 (KSTYAR), 137 to 139 (TLE), Gln158, Tyr172, and Gln182. Glu139 serves as the catalytic Proton donor/acceptor.

It belongs to the dCTP deaminase family. As to quaternary structure, homotrimer.

It catalyses the reaction dCTP + H2O + H(+) = dUTP + NH4(+). It functions in the pathway pyrimidine metabolism; dUMP biosynthesis; dUMP from dCTP (dUTP route): step 1/2. Catalyzes the deamination of dCTP to dUTP. The protein is dCTP deaminase of Chromobacterium violaceum (strain ATCC 12472 / DSM 30191 / JCM 1249 / CCUG 213 / NBRC 12614 / NCIMB 9131 / NCTC 9757 / MK).